Consider the following 222-residue polypeptide: Riboflavin kinase (222 aa).

The interval 1 to 92 (MVEAEDLQSL…VRIFNPDQRG (92 aa)) is unknown. Residues 93-222 (YTLTGTVISG…DTIEVEITHD (130 aa)) are riboflavin kinase. 102-107 (GLGEGR) contacts CDP. Mg(2+)-binding residues include threonine 131 and asparagine 133. Residues threonine 188 and glutamate 196 each contribute to the FMN site. 201-204 (CELR) lines the CDP pocket.

This sequence belongs to the archaeal riboflavin kinase family. It depends on Mg(2+) as a cofactor.

The enzyme catalyses riboflavin + CTP = CDP + FMN + H(+). It participates in cofactor biosynthesis; FMN biosynthesis; FMN from riboflavin (CTP route): step 1/1. Catalyzes the CTP-dependent phosphorylation of riboflavin (vitamin B2) to form flavin mononucleotide (FMN). The protein is Riboflavin kinase (ribK) of Methanoculleus marisnigri (strain ATCC 35101 / DSM 1498 / JR1).